Consider the following 332-residue polypeptide: Endo-1,4-beta-xylanase (332 aa).

A signal peptide spans 1–21; the sequence is MLSSTTLLAILSALALTSVQA. The 291-residue stretch at 26-316 folds into the GH10 domain; sequence KNSLDYLANK…KSTYYVVQQA (291 aa). The Proton donor role is filled by E120. A disulfide bridge connects residues C128 and C160. E214 (nucleophile) is an active-site residue. A disulfide bridge connects residues C247 and C253.

Belongs to the glycosyl hydrolase 10 (cellulase F) family.

The protein resides in the secreted. The catalysed reaction is Endohydrolysis of (1-&gt;4)-beta-D-xylosidic linkages in xylans.. Its function is as follows. Requires at least three xylose residues for catalytic activity. Does not have activity against xylobiose. This chain is Endo-1,4-beta-xylanase, found in Naganishia albida (Cryptococcus albidus).